A 437-amino-acid polypeptide reads, in one-letter code: Major capsid protein (437 aa).

4 N-linked (Glc...) asparagine; by host glycosylation sites follow: N280, N302, N399, and N406.

The protein belongs to the NCLDV major capsid protein family. Myristoylated at the C-terminus. In terms of processing, glycosylated; highly branched oligosaccharides. The pattern of glycosylation sites are unusual.

It is found in the virion. In terms of biological role, major capsid protein self-assembles to form an icosahedral capsid with a pseudo T=169 symmetry, about 190 nm in diameter, and consisting of 1680 major capsid proteins trimers. The capsid consists in 5040 copies of the major capsid protein (hexamers), 60 copies of the penton protein (pentamers) and 1800 minor capsid proteins of different types. The minor capsid proteins form a hexagonal network below the outer capsid shell, stabilizing the capsid by binding neighboring capsomers together. This Chlorella (PBCV-1) protein is Major capsid protein.